The sequence spans 184 residues: Ribosome-recycling factor (184 aa).

This sequence belongs to the RRF family.

The protein localises to the cytoplasm. Responsible for the release of ribosomes from messenger RNA at the termination of protein biosynthesis. May increase the efficiency of translation by recycling ribosomes from one round of translation to another. In Aquifex aeolicus (strain VF5), this protein is Ribosome-recycling factor.